The following is an 88-amino-acid chain: Protein MATERNALLY EXPRESSED GENE 2 (88 aa).

Positions 1-27 (MEYRKRVDALVFFSLLLLGYFAAHAHG) are cleaved as a signal peptide. Cys-65 and Cys-87 are joined by a disulfide.

This sequence belongs to the MEG family. As to expression, expressed exclusively in endosperm.

The sequence is that of Protein MATERNALLY EXPRESSED GENE 2 (MEG2) from Zea mays (Maize).